The sequence spans 219 residues: Cytidylate kinase (219 aa).

An ATP-binding site is contributed by 10–18 (GPAAAGKST).

This sequence belongs to the cytidylate kinase family. Type 1 subfamily.

It localises to the cytoplasm. The enzyme catalyses CMP + ATP = CDP + ADP. It carries out the reaction dCMP + ATP = dCDP + ADP. This chain is Cytidylate kinase, found in Staphylococcus aureus (strain MRSA252).